We begin with the raw amino-acid sequence, 435 residues long: Trigger factor (435 aa).

Residues 163–248 (DDITLIDFTG…INEIKRKELA (86 aa)) form the PPIase FKBP-type domain.

This sequence belongs to the FKBP-type PPIase family. Tig subfamily.

The protein localises to the cytoplasm. It carries out the reaction [protein]-peptidylproline (omega=180) = [protein]-peptidylproline (omega=0). Functionally, involved in protein export. Acts as a chaperone by maintaining the newly synthesized protein in an open conformation. Functions as a peptidyl-prolyl cis-trans isomerase. The chain is Trigger factor from Desulforamulus reducens (strain ATCC BAA-1160 / DSM 100696 / MI-1) (Desulfotomaculum reducens).